Reading from the N-terminus, the 382-residue chain is MATLSTHPNYGFHLGQAQGLEDYAPQSQLQLSPGMDMDIKRVLHYSQSLAAMGGSPNGPAGQGVNGSSGMGHHMSSHMTPHHMHQAVSAQQTLSPNSSIGSAGSLGSQSSLGSNGSGLNSSSGHQSAGMHSLATSPGQEGHIKRPMNAFMVWSRLQRRQIAKDNPKMHNSEISKRLGAEWKLLAESEKRPFIDEAKRLRALHMKEHPDYKYRPRRKPKNPLTAGPQGGLQMQAGGMGQQKLGAGPGAGAGGYNPFHQLPPYFAPSHHLDQGYPVPYFGGFDPLALSKLHQSQAAAAAAVNNQGQQQGQAPPQLPPTSLSSFYSGIYSGISAPSLYAAHSANAAGLYPSSSTSSPGSSPGTITPNGMDGSMDSALRRPVPVLY.

Disordered regions lie at residues 53-142 (GGSP…EGHI) and 346-382 (YPSS…PVLY). Over residues 60–69 (AGQGVNGSSG) the composition is skewed to gly residues. Residues 96–123 (NSSIGSAGSLGSQSSLGSNGSGLNSSSG) show a composition bias toward low complexity. The segment at residues 142–210 (IKRPMNAFMV…LHMKEHPDYK (69 aa)) is a DNA-binding region (HMG box). Over residues 347 to 360 (PSSSTSSPGSSPGT) the composition is skewed to low complexity.

Initially expressed in a pair-rule-like pattern which is rapidly replaced by strong neuroectoderm expression.

The protein resides in the nucleus. Essential for segmentation and CNS development. May modulate the actions of other transcription factors, including gap and pair-rule proteins. The polypeptide is SOX domain-containing protein dichaete (D) (Drosophila melanogaster (Fruit fly)).